The primary structure comprises 463 residues: MIIKKNVSYKDRSFIALTDDTRVIESLLKGEGDKFGLQKDADTDKVLFVKNKQNKNFITPQIAQSCSMVESYELNDILMANFSHNSPNIVGITGTNGKTTTAAIIYSILLDLGFNVALLGTRGFFINEHRIKPKGLTTPSMLELYENLCIAMEQKCNFFIMEVSSHAIEQERIAGLDFALKILTNITSDHLDYHKSVEEYRRIKNSFFEGEGRKLLNADEPYIYCTDKAAYFYGIEKKGNLSVDVYALENGIDGYISWRERDYKTNEQSAIQAHLYGKHNLYNTLAAIGAVKILTQEPLERIAEALEHFGGVSGRMEVVHNMPLVIVDFAHTYDGMYQIFESFRHCKIAVVFGAGGDRDKSKRPKMGACAQQFAHKIYITSDNPRTESPKSIIEDILSGMQDGEYVFVEADRKKAIYMALESLESDEVLLILGKGDEDYQIIGNEKIYFDDREVVRNYFASRT.

UDP-N-acetyl-alpha-D-muramoyl-L-alanyl-D-glutamate is bound at residue T21. 94 to 100 contributes to the ATP binding site; it reads GTNGKTT. UDP-N-acetyl-alpha-D-muramoyl-L-alanyl-D-glutamate is bound by residues 137-138, S164, Q170, and R172; that span reads TT. At K204 the chain carries N6-carboxylysine. Residues R358, 382–385, G433, and E437 each bind meso-2,6-diaminopimelate; that span reads DNPR. A Meso-diaminopimelate recognition motif motif is present at residues 382-385; the sequence is DNPR.

This sequence belongs to the MurCDEF family. MurE subfamily. It depends on Mg(2+) as a cofactor. Carboxylation is probably crucial for Mg(2+) binding and, consequently, for the gamma-phosphate positioning of ATP.

Its subcellular location is the cytoplasm. The enzyme catalyses UDP-N-acetyl-alpha-D-muramoyl-L-alanyl-D-glutamate + meso-2,6-diaminopimelate + ATP = UDP-N-acetyl-alpha-D-muramoyl-L-alanyl-gamma-D-glutamyl-meso-2,6-diaminopimelate + ADP + phosphate + H(+). It participates in cell wall biogenesis; peptidoglycan biosynthesis. Functionally, catalyzes the addition of meso-diaminopimelic acid to the nucleotide precursor UDP-N-acetylmuramoyl-L-alanyl-D-glutamate (UMAG) in the biosynthesis of bacterial cell-wall peptidoglycan. The protein is UDP-N-acetylmuramoyl-L-alanyl-D-glutamate--2,6-diaminopimelate ligase of Helicobacter hepaticus (strain ATCC 51449 / 3B1).